The primary structure comprises 1111 residues: NBPF family member NBPF9 (1111 aa).

Residues 70–130 (MLRNERQFKE…RSLNEHLQAL (61 aa)) are a coiled coil. Positions 161–198 (KLSPENDEDEDEDVQVEEDEKVLESSAPREVQKAEESK) are disordered. Residues 165–181 (ENDEDEDEDVQVEEDEK) show a composition bias toward acidic residues. In terms of domain architecture, Olduvai 1 spans 165-259 (ENDEDEDEDV…ECQDALNILP (95 aa)). Residues 341–401 (MLRNERQFKE…RSLNEHLQAL (61 aa)) adopt a coiled-coil conformation. Olduvai domains lie at 436–528 (ENDN…HIIP), 529–600 (ENES…VDIG), 601–692 (RHRW…PSCP), 695–750 (SREL…LDLD), 751–843 (RIKK…RSKK), 844–919 (KRRR…LDVD), 920–1012 (RIKK…RSKK), and 1013–1111 (ERRR…IFPQ). Disordered stretches follow at residues 451–474 (EKVQ…PEDS) and 510–569 (TLIG…STPS). 2 stretches are compositionally biased toward acidic residues: residues 530–539 (NESDDEEEEE) and 550–562 (ESEE…ESWD). Disordered regions lie at residues 829–871 (KKGK…LDEK) and 999–1033 (KGKG…PRLN). Basic residues-rich tracts occupy residues 831–849 (GKGK…RRGR) and 1000–1018 (GKGK…RRGR).

The protein belongs to the NBPF family. As to expression, expressed in a neuroblastoma cell line.

The protein localises to the cytoplasm. In Homo sapiens (Human), this protein is NBPF family member NBPF9.